Consider the following 196-residue polypeptide: Protease (196 aa).

Residues H54, D70, and C121 contribute to the active site.

Belongs to the peptidase C5 family. As to quaternary structure, interacts with protease cofactor pVI-C; this interaction is necessary for protease activation.

It is found in the virion. It localises to the host nucleus. It carries out the reaction Cleaves proteins of the adenovirus and its host cell at two consensus sites: -Yaa-Xaa-Gly-Gly-|-Xaa- and -Yaa-Xaa-Gly-Xaa-|-Gly- (in which Yaa is Met, Ile or Leu, and Xaa is any amino acid).. Requires DNA and protease cofactor for maximal activation. Inside nascent virions, becomes partially activated by binding to the viral DNA, allowing it to cleave the cofactor that binds to the protease and fully activates it. Actin, like the viral protease cofactor, seems to act as a cofactor in the cleavage of cytokeratin 18 and of actin itself. Its function is as follows. Cleaves viral precursor proteins (pTP, pIIIa, pVI, pVII, pVIII, and pX) inside newly assembled particles giving rise to mature virions. Protease complexed to its cofactor slides along the viral DNA to specifically locate and cleave the viral precursors. Mature virions have a weakened organization compared to the unmature virions, thereby facilitating subsequent uncoating. Without maturation, the particle lacks infectivity and is unable to uncoat. Late in adenovirus infection, in the cytoplasm, may participate in the cytoskeleton destruction. Cleaves host cell cytoskeletal keratins K7 and K18. The chain is Protease from Bos taurus (Bovine).